The sequence spans 242 residues: NAD-dependent protein deacetylase 1 (242 aa).

The 242-residue stretch at 1-242 (MTITSWLAAS…LNEQLAEVDP (242 aa)) folds into the Deacetylase sirtuin-type domain. Ala-19, Thr-23, Phe-30, Arg-31, Gln-97, Val-99, Asp-100, and His-115 together coordinate NAD(+). A nicotinamide-binding site is contributed by Phe-30. Nicotinamide is bound by residues Val-99 and Asp-100. Residue His-115 is the Proton acceptor of the active site. Residues Cys-123, Cys-126, Cys-142, and Cys-144 each contribute to the Zn(2+) site. Positions 182, 183, 207, and 226 each coordinate NAD(+).

This sequence belongs to the sirtuin family. Class U subfamily. Zn(2+) is required as a cofactor.

The protein localises to the cytoplasm. The catalysed reaction is N(6)-acetyl-L-lysyl-[protein] + NAD(+) + H2O = 2''-O-acetyl-ADP-D-ribose + nicotinamide + L-lysyl-[protein]. Functionally, NAD-dependent protein deacetylase which modulates the activities of several enzymes which are inactive in their acetylated form. In Geobacillus kaustophilus (strain HTA426), this protein is NAD-dependent protein deacetylase 1.